The sequence spans 415 residues: MHHDKRCKESNMKIVKAEVFVTCPGRNFVTLKITTEDGITGLGDATLNGRELSVASYLQDHLCPQLIGRDAHRIEDIWQFFYKGAYWRRGPVTMSAISAVDMALWDIKAKAANMPLYQLLGGASREGVMVYCHTTGHSIDEALDDYARHQELGFKAIRVQCGIPGMKTTYGMSKGKGLAYEPATKGQWPEEQLWSTEKYLDFMPKLFDAVRNKFGFDEHLLHDMHHRLTPIEAARFGKSIEDYRMFWMEDPTPAENQECFRLIRQHTVTPIAVGEVFNSIWDCKQLIEEQLIDYIRTTLTHAGGITGMRRIADFASLYQVRTGSHGPSDLSPVCMAAALHFDLWVPNFGVQEYMGYSEQMLEVFPHNWTFDNGYMHPGEKPGLGIEFDEKLAAKYPYEPAYLPVARLEDGTLWNW.

Residues N48 and H133 each coordinate substrate. Catalysis depends on Y170, which acts as the Proton donor/acceptor. D223 is a binding site for Mg(2+). H225 (proton donor/acceptor) is an active-site residue. Mg(2+) contacts are provided by E249, D250, and E275. Substrate-binding residues include E275, R296, H325, D329, and E352.

This sequence belongs to the mandelate racemase/muconate lactonizing enzyme family. GalD subfamily. Mg(2+) serves as cofactor.

It carries out the reaction D-mannonate = 2-dehydro-3-deoxy-D-gluconate + H2O. Functionally, has low D-mannonate dehydratase activity (in vitro), suggesting that this is not a physiological substrate and that it has no significant role in D-mannonate degradation in vivo. Has no detectable activity with a panel of 70 other acid sugars (in vitro). This chain is D-galactonate dehydratase family member RspA (rspA), found in Escherichia coli O6:H1 (strain CFT073 / ATCC 700928 / UPEC).